A 439-amino-acid chain; its full sequence is Adenylosuccinate synthetase (439 aa).

Residues 14-20 and 42-44 each bind GTP; these read GDEGKGK and GHT. Residue Asp15 is the Proton acceptor of the active site. The Mg(2+) site is built by Asp15 and Gly42. IMP-binding positions include 15-18, 40-43, Thr130, Arg144, Gln225, Thr240, and Arg304; these read DEGK and NAGH. The Proton donor role is filled by His43. 300 to 306 contacts substrate; it reads TTTGRRR. Residues Arg306, 332–334, and 414–416 each bind GTP; these read KLD and SLG.

Belongs to the adenylosuccinate synthetase family. Homodimer. Requires Mg(2+) as cofactor.

The protein localises to the cytoplasm. It carries out the reaction IMP + L-aspartate + GTP = N(6)-(1,2-dicarboxyethyl)-AMP + GDP + phosphate + 2 H(+). The protein operates within purine metabolism; AMP biosynthesis via de novo pathway; AMP from IMP: step 1/2. Plays an important role in the de novo pathway of purine nucleotide biosynthesis. Catalyzes the first committed step in the biosynthesis of AMP from IMP. This chain is Adenylosuccinate synthetase, found in Prochlorococcus marinus (strain MIT 9303).